Consider the following 582-residue polypeptide: Tetratricopeptide repeat protein 24 (582 aa).

The disordered stretch occupies residues Met-1–Arg-31. 8 TPR repeats span residues Ile-36 to Ala-69, Gln-79 to Gln-112, Gly-117 to Gln-150, Gly-154 to Glu-187, Gly-236 to Glu-271, Ala-273 to Val-306, Gly-313 to Ser-346, and Trp-353 to Glu-386. 2 disordered regions span residues Thr-418–Pro-481 and Val-548–Val-582. Residues Gly-441–Gly-454 show a composition bias toward polar residues. Residues Glu-462–Ser-472 show a composition bias toward basic and acidic residues.

This Homo sapiens (Human) protein is Tetratricopeptide repeat protein 24 (TTC24).